Consider the following 263-residue polypeptide: uncharacterized protein (263 aa).

The GST N-terminal domain occupies 44 to 131 (QVYSLGTPNG…YLADKFNHLI (88 aa)). Residues 134-263 (DWAQRTEVLN…ALEVDYKAIK (130 aa)) form the GST C-terminal domain.

This sequence belongs to the GST superfamily. In terms of assembly, homodimer.

This is an uncharacterized protein from Streptococcus mutans serotype c (strain ATCC 700610 / UA159).